The chain runs to 169 residues: Cytochrome c oxidase subunit 4 isoform 1, mitochondrial (169 aa).

A mitochondrion-targeting transit peptide spans 1–22 (MLATRVFSLVGKRAISTSVCVR). The Mitochondrial matrix portion of the chain corresponds to 23 to 98 (AHESVVKSED…SFAEMNRGSN (76 aa)). K29 carries the post-translational modification N6-acetyllysine; alternate. At K29 the chain carries N6-succinyllysine; alternate. K53 bears the N6-acetyllysine mark. Phosphoserine is present on residues S56 and S58. The residue at position 60 (K60) is an N6-acetyllysine; alternate. At K60 the chain carries N6-succinyllysine; alternate. The residue at position 67 (K67) is an N6-acetyllysine. The helical transmembrane segment at 99–124 (EWKTVVGGAMFFIGFTALVIMWQKHY) threads the bilayer. Residues 125-169 (VYGPLPQSFDKEWVAKQTKRMLDMKVNPIQGLASKWDYEKNEWKK) are Mitochondrial intermembrane-facing.

This sequence belongs to the cytochrome c oxidase IV family. Component of the cytochrome c oxidase (complex IV, CIV), a multisubunit enzyme composed of 14 subunits. The complex is composed of a catalytic core of 3 subunits MT-CO1, MT-CO2 and MT-CO3, encoded in the mitochondrial DNA, and 11 supernumerary subunits COX4I1 (or COX4I2), COX5A, COX5B, COX6A1 (or COX6A2), COX6B1 (or COX6B2), COX6C, COX7A2 (or COX7A1), COX7B, COX7C, COX8A and NDUFA4, which are encoded in the nuclear genome. The complex exists as a monomer or a dimer and forms supercomplexes (SCs) in the inner mitochondrial membrane with NADH-ubiquinone oxidoreductase (complex I, CI) and ubiquinol-cytochrome c oxidoreductase (cytochrome b-c1 complex, complex III, CIII), resulting in different assemblies (supercomplex SCI(1)III(2)IV(1) and megacomplex MCI(2)III(2)IV(2)). Interacts with AFG1L. Interacts with PHB2; the interaction decreases in absence of SPHK2. Interacts with ABCB7; this interaction allows the regulation of cellular iron homeostasis and cellular reactive oxygen species (ROS) levels in cardiomyocytes. Interacts with FLVCR2; this interaction occurs in the absence of heme and is disrupted upon heme binding. Interacts with IRGC. In terms of tissue distribution, ubiquitous.

The protein resides in the mitochondrion inner membrane. It participates in energy metabolism; oxidative phosphorylation. Its function is as follows. Component of the cytochrome c oxidase, the last enzyme in the mitochondrial electron transport chain which drives oxidative phosphorylation. The respiratory chain contains 3 multisubunit complexes succinate dehydrogenase (complex II, CII), ubiquinol-cytochrome c oxidoreductase (cytochrome b-c1 complex, complex III, CIII) and cytochrome c oxidase (complex IV, CIV), that cooperate to transfer electrons derived from NADH and succinate to molecular oxygen, creating an electrochemical gradient over the inner membrane that drives transmembrane transport and the ATP synthase. Cytochrome c oxidase is the component of the respiratory chain that catalyzes the reduction of oxygen to water. Electrons originating from reduced cytochrome c in the intermembrane space (IMS) are transferred via the dinuclear copper A center (CU(A)) of subunit 2 and heme A of subunit 1 to the active site in subunit 1, a binuclear center (BNC) formed by heme A3 and copper B (CU(B)). The BNC reduces molecular oxygen to 2 water molecules using 4 electrons from cytochrome c in the IMS and 4 protons from the mitochondrial matrix. In Homo sapiens (Human), this protein is Cytochrome c oxidase subunit 4 isoform 1, mitochondrial.